Consider the following 287-residue polypeptide: Diaminopimelate epimerase (287 aa).

3 residues coordinate substrate: asparagine 11, glutamine 44, and asparagine 64. The active-site Proton donor is cysteine 73. Substrate is bound by residues 74–75, asparagine 157, asparagine 190, and 208–209; these read GN and ER. The active-site Proton acceptor is the cysteine 217. Residue 218-219 coordinates substrate; the sequence is GT.

It belongs to the diaminopimelate epimerase family. As to quaternary structure, homodimer.

The protein resides in the cytoplasm. It catalyses the reaction (2S,6S)-2,6-diaminopimelate = meso-2,6-diaminopimelate. It functions in the pathway amino-acid biosynthesis; L-lysine biosynthesis via DAP pathway; DL-2,6-diaminopimelate from LL-2,6-diaminopimelate: step 1/1. In terms of biological role, catalyzes the stereoinversion of LL-2,6-diaminopimelate (L,L-DAP) to meso-diaminopimelate (meso-DAP), a precursor of L-lysine and an essential component of the bacterial peptidoglycan. This chain is Diaminopimelate epimerase, found in Halorhodospira halophila (strain DSM 244 / SL1) (Ectothiorhodospira halophila (strain DSM 244 / SL1)).